The sequence spans 506 residues: Bifunctional purine biosynthesis protein PurH (506 aa).

In terms of domain architecture, MGS-like spans 1 to 142 (MRAIISVYRK…KNFFRVVILV (142 aa)).

This sequence belongs to the PurH family.

It carries out the reaction (6R)-10-formyltetrahydrofolate + 5-amino-1-(5-phospho-beta-D-ribosyl)imidazole-4-carboxamide = 5-formamido-1-(5-phospho-D-ribosyl)imidazole-4-carboxamide + (6S)-5,6,7,8-tetrahydrofolate. It catalyses the reaction IMP + H2O = 5-formamido-1-(5-phospho-D-ribosyl)imidazole-4-carboxamide. Its pathway is purine metabolism; IMP biosynthesis via de novo pathway; 5-formamido-1-(5-phospho-D-ribosyl)imidazole-4-carboxamide from 5-amino-1-(5-phospho-D-ribosyl)imidazole-4-carboxamide (10-formyl THF route): step 1/1. It functions in the pathway purine metabolism; IMP biosynthesis via de novo pathway; IMP from 5-formamido-1-(5-phospho-D-ribosyl)imidazole-4-carboxamide: step 1/1. This is Bifunctional purine biosynthesis protein PurH from Aquifex aeolicus (strain VF5).